A 94-amino-acid chain; its full sequence is Co-chaperonin GroES (94 aa).

It belongs to the GroES chaperonin family. As to quaternary structure, heptamer of 7 subunits arranged in a ring. Interacts with the chaperonin GroEL.

It is found in the cytoplasm. Its function is as follows. Together with the chaperonin GroEL, plays an essential role in assisting protein folding. The GroEL-GroES system forms a nano-cage that allows encapsulation of the non-native substrate proteins and provides a physical environment optimized to promote and accelerate protein folding. GroES binds to the apical surface of the GroEL ring, thereby capping the opening of the GroEL channel. The chain is Co-chaperonin GroES from Ehrlichia chaffeensis (strain ATCC CRL-10679 / Arkansas).